Reading from the N-terminus, the 374-residue chain is 4-galactosyl-N-acetylglucosaminide 3-alpha-L-fucosyltransferase FUT5 (374 aa).

At 1–15 (MDPLGPAKPQWLWRR) the chain is on the cytoplasmic side. Residues 16–34 (CLAGLLFQLLVAVCFFSYL) traverse the membrane as a helical; Signal-anchor for type II membrane protein segment. At 35–374 (RVSQDHATGS…TVRSIAAWFT (340 aa)) the chain is on the lumenal side. N-linked (GlcNAc...) asparagine glycosylation is found at asparagine 60, asparagine 105, asparagine 167, and asparagine 198.

Belongs to the glycosyltransferase 10 family.

The protein resides in the golgi apparatus. The protein localises to the golgi stack membrane. It catalyses the reaction a beta-D-galactosyl-(1-&gt;3)-N-acetyl-beta-D-glucosaminyl derivative + GDP-beta-L-fucose = a beta-D-galactosyl-(1-&gt;3)-[alpha-L-fucosyl-(1-&gt;4)]-N-acetyl-beta-D-glucosaminyl derivative + GDP + H(+). It carries out the reaction an N-acetyl-alpha-neuraminyl-(2-&gt;3)-beta-D-galactosyl-(1-&gt;4)-N-acetyl-beta-D-glucosaminyl derivative + GDP-beta-L-fucose = an alpha-Neu5Ac-(2-&gt;3)-beta-D-Gal-(1-&gt;4)-[alpha-L-Fuc-(1-&gt;3)]-beta-D-GlcNAc derivative + GDP + H(+). The catalysed reaction is an alpha-Neu5Ac-(2-&gt;3)-beta-D-Gal-(1-&gt;4)-beta-D-GlcNAc-(1-&gt;3)-beta-D-Gal-(1-&gt;4)-[alpha-L-Fuc-(1-&gt;3)]-beta-D-GlcNAc derivative + GDP-beta-L-fucose = an alpha-Neu5Ac-(2-&gt;3)-beta-D-Gal-(1-&gt;4)-[alpha-L-Fuc-(1-&gt;3)]-beta-D-GlcNAc-(1-&gt;3)-beta-D-Gal-(1-&gt;4)-[alpha-L-Fuc-(1-&gt;3)]-beta-D-GlcNAc derivative + GDP + H(+). The enzyme catalyses a beta-D-galactosyl-(1-&gt;4)-N-acetyl-beta-D-glucosaminyl derivative + GDP-beta-L-fucose = a beta-D-galactosyl-(1-&gt;4)-[alpha-L-fucosyl-(1-&gt;3)]-N-acetyl-beta-D-glucosaminyl derivative + GDP + H(+). It catalyses the reaction a neolactoside nLc4Cer + GDP-beta-L-fucose = a neolactoside III(3)-alpha-Fuc-nLc4Cer + GDP + H(+). It carries out the reaction a neolactoside nLc6Cer + GDP-beta-L-fucose = beta-D-galactosyl-(1-&gt;4)-N-acetyl-beta-D-glucosaminyl-(1-&gt;3)-beta-D-galactosyl-(1-&gt;4)-[alpha-L-fucosyl-(1-&gt;3)]-N-acetyl-beta-D-glucosaminyl-(1-&gt;3)-beta-D-galactosyl-(1-&gt;4)-beta-D-glucosyl-(1&lt;-&gt;1')-ceramide + GDP + H(+). The catalysed reaction is a neolactoside nLc6Cer(d18:1(4E)) + GDP-beta-L-fucose = a neolactoside III(3)-alpha-Fuc-nLc6Cer(d18:1(4E)) + GDP + H(+). The enzyme catalyses a neolactoside nLc4Cer(d18:1(4E)) + GDP-beta-L-fucose = a neolactoside III(3)-alpha-Fuc-nLc4Cer(d18:1(4E)) + GDP + H(+). It catalyses the reaction a neolactoside VI(3)-alpha-NeuNAc-nLc6Cer + GDP-beta-L-fucose = a neolactoside VI(3)-alpha-NeuAc,III(3)-alphaFuc-nLc6Cer + GDP + H(+). It carries out the reaction beta-D-galactosyl-(1-&gt;4)-N-acetyl-D-glucosamine + GDP-beta-L-fucose = beta-D-galactosyl-(1-&gt;4)-[alpha-L-fucosyl-(1-&gt;3)]-N-acetyl-D-glucosamine + GDP + H(+). The catalysed reaction is N-acetyl-alpha-neuraminosyl-(2-&gt;3)-beta-D-galactosyl-(1-&gt;4)-N-acetyl-beta-D-glucosamine + GDP-beta-L-fucose = N-acetyl-alpha-neuraminosyl-(2-&gt;3)-beta-D-galactosyl-(1-&gt;4)-[alpha-L-fucosyl-(1-&gt;3)]-N-acetyl-beta-D-glucosamine + GDP + H(+). The enzyme catalyses alpha-L-Fuc-(1-&gt;2)-beta-D-Gal-(1-&gt;4)-D-GlcNAc + GDP-beta-L-fucose = alpha-L-Fuc-(1-&gt;2)-beta-D-Gal-(1-&gt;4)-[alpha-L-Fuc-(1-&gt;3)]-D-GlcNAc + GDP + H(+). It catalyses the reaction an alpha-Neu5Ac-(2-&gt;3)-beta-D-Gal-(1-&gt;3)-D-GlcNAc derivative + GDP-beta-L-fucose = an alpha-Neu5Ac-(2-&gt;3)-beta-D-Gal-(1-&gt;3)-[alpha-L-Fuc-(1-&gt;4)]-beta-D-GlcNAc derivative + GDP + H(+). It functions in the pathway protein modification; protein glycosylation. Functionally, catalyzes preferentially the transfer of L-fucose, from a guanosine diphosphate-beta-L-fucose, to the N-acetyl-beta-D-glucosamine (GlcNAc) of an N-acetyllactosamine unit (type 2 chain) of an oligosaccharide, or a glycoprotein- and a glycolipid-linked N-acetyllactosamine unit via an alpha (1,3) linkage and participates in the surface expression of VIM-2, Lewis X/SSEA-1 and sialyl Lewis X antigens. Preferentially transfers fucose to the GlcNAc of an internal N-acetyllactosamine unit of a poly-N-acetyllactosamine chain acceptor substrate. Also catalyzes to a lesser extend the transfer of L-fucose to the GlcNAc of a type 1 (beta-D-galactosyl-(1-&gt;3)-N-acetyl-beta-D-glucosaminyl) or H-type 1 (alpha-L-Fuc-(1-&gt;2)-beta-D-Gal-(1-&gt;3)-D-GlcNAc) chain oligosaccharide via an alpha (1,4) linkage. Preferentially catalyzes sialylated type 2 oligosaccharide acceptors over neutral type 2 or H type 2 (alpha-L-Fuc-(1-&gt;2)-beta-D-Gal-(1-&gt;4)-D-GlcNAc) oligosaccharide acceptors. Lactose-based structures are also acceptor substrates. This chain is 4-galactosyl-N-acetylglucosaminide 3-alpha-L-fucosyltransferase FUT5, found in Gorilla gorilla gorilla (Western lowland gorilla).